We begin with the raw amino-acid sequence, 321 residues long: Beta-1,3-N-acetylglucosaminyltransferase manic fringe (321 aa).

Topologically, residues 1–7 (MQCRLPR) are cytoplasmic. The helical; Signal-anchor for type II membrane protein transmembrane segment at 8–27 (GLAGALLTLLCMGLLCLRYH) threads the bilayer. The Lumenal portion of the chain corresponds to 28-321 (LNLSPQRVQE…TPWCPQLGAR (294 aa)). Residue Arg70 coordinates substrate. N-linked (GlcNAc...) asparagine glycosylation occurs at Asn109. 2 cysteine pairs are disulfide-bonded: Cys110/Cys121 and Cys139/Cys202. Residue Asp143 participates in substrate binding. Asp144 serves as a coordination point for Mn(2+). Residue Asn185 is glycosylated (N-linked (GlcNAc...) asparagine). Residue Asp232 is part of the active site. Mn(2+) is bound at residue His256. Cys306 and Cys315 form a disulfide bridge.

This sequence belongs to the glycosyltransferase 31 family. The cofactor is Mn(2+).

The protein localises to the golgi apparatus membrane. It catalyses the reaction 3-O-(alpha-L-fucosyl)-L-threonyl-[EGF-like domain protein] + UDP-N-acetyl-alpha-D-glucosamine = 3-O-(N-acetyl-beta-D-glucosaminyl-(1-&gt;3)-alpha-L-fucosyl)-L-threonyl-[EGF-like domain protein] + UDP + H(+). It carries out the reaction 3-O-(alpha-L-fucosyl)-L-seryl-[EGF-like domain protein] + UDP-N-acetyl-alpha-D-glucosamine = 3-O-(N-acetyl-beta-D-glucosaminyl-(1-&gt;3)-alpha-L-fucosyl)-L-seryl-[EGF-like domain protein] + UDP + H(+). Glycosyltransferase that initiates the elongation of O-linked fucose residues attached to EGF-like repeats in the extracellular domain of Notch molecules. Modulates NOTCH1 activity by modifying O-fucose residues at specific EGF-like domains resulting in inhibition of NOTCH1 activation by JAG1 and enhancement of NOTCH1 activation by DLL1 via an increase in its binding to DLL1. The sequence is that of Beta-1,3-N-acetylglucosaminyltransferase manic fringe (MFNG) from Pan troglodytes (Chimpanzee).